A 331-amino-acid chain; its full sequence is Cytosolic Fe-S cluster assembly factor CFD1 (331 aa).

G25–S32 lines the ATP pocket. 2 residues coordinate [4Fe-4S] cluster: C211 and C214.

The protein belongs to the Mrp/NBP35 ATP-binding proteins family. NUBP2/CFD1 subfamily. In terms of assembly, heterotetramer of 2 NBP35 and 2 CFD1 chains. [4Fe-4S] cluster serves as cofactor.

Its subcellular location is the cytoplasm. Component of the cytosolic iron-sulfur (Fe/S) protein assembly (CIA) machinery. Required for maturation of extramitochondrial Fe-S proteins. The NBP35-CFD1 heterotetramer forms a Fe-S scaffold complex, mediating the de novo assembly of an Fe-S cluster and its transfer to target apoproteins. The sequence is that of Cytosolic Fe-S cluster assembly factor CFD1 from Cryptococcus neoformans var. neoformans serotype D (strain B-3501A) (Filobasidiella neoformans).